A 252-amino-acid chain; its full sequence is Eukaryotic translation initiation factor 3 subunit K (252 aa).

The 180-residue stretch at 46–225 folds into the PCI domain; sequence FDCYANLALL…VKVPTNKENE (180 aa).

The protein belongs to the eIF-3 subunit K family. As to quaternary structure, component of the eukaryotic translation initiation factor 3 (eIF-3) complex.

Its subcellular location is the cytoplasm. In terms of biological role, component of the eukaryotic translation initiation factor 3 (eIF-3) complex, which is involved in protein synthesis of a specialized repertoire of mRNAs and, together with other initiation factors, stimulates binding of mRNA and methionyl-tRNAi to the 40S ribosome. The eIF-3 complex specifically targets and initiates translation of a subset of mRNAs involved in cell proliferation. The chain is Eukaryotic translation initiation factor 3 subunit K from Aspergillus terreus (strain NIH 2624 / FGSC A1156).